The chain runs to 505 residues: MAQVINTNSLSLLTQNNLNKSQSALGTAIERLSSGLRINSAKDDAAGQAIANRFTANIKGLTQASRNANDGISIAQTTEGALNEINNNLQRVRELAVQSANGTNSQSDLDSIQAEITQRLNEIDRVSGQTQFNGVKVLAQDNTLTIQVGANDGETIDIDLKEISSKTLGLDKLNVQDAYTPKETAVTVDKTTYKNGTDTITAQSNTDIQTAIGGGATGVTGADIKFKDGQYYLDVKGGASAGVYKATYDETTKKVNIDTTDKTPLATAEATAIRGTATITHNQIAEVTKEGVDTTTVAAQLAAAGVTGADKDNTSLVKLSFEDKNGKVIDGGYAVKMGDDFYAATYDEKQVQLLLNNHYTDGAGVLQTGAVKFGGANGKSEVVTATVGKTYLASDLDKHNFRTGGELKEVNTDKTENPLQKIDAALAQVDTLRSDLGAVQNRFNSAITNLGNTVNNLSSARSRIEDSDYATEVSNMSRAQILQQAGTSVLAQANQVPQNVLSLLR.

This sequence belongs to the bacterial flagellin family.

Its subcellular location is the secreted. It is found in the bacterial flagellum. Flagellin is the subunit protein which polymerizes to form the filaments of bacterial flagella. This is Flagellin (fliC) from Salmonella muenchen.